A 246-amino-acid polypeptide reads, in one-letter code: DNA-directed RNA polymerase subunit alpha (246 aa).

Belongs to the RNA polymerase alpha chain family. In plastids the minimal PEP RNA polymerase catalytic core is composed of four subunits: alpha, beta, beta', and beta''. When a (nuclear-encoded) sigma factor is associated with the core the holoenzyme is formed, which can initiate transcription (Potential).

It localises to the plastid. The catalysed reaction is RNA(n) + a ribonucleoside 5'-triphosphate = RNA(n+1) + diphosphate. Functionally, DNA-dependent RNA polymerase catalyzes the transcription of DNA into RNA using the four ribonucleoside triphosphates as substrates. The sequence is that of DNA-directed RNA polymerase subunit alpha (rpoA) from Helicosporidium sp. subsp. Simulium jonesii (Green alga).